The chain runs to 423 residues: 3-phosphoshikimate 1-carboxyvinyltransferase (423 aa).

3-phosphoshikimate contacts are provided by lysine 19, serine 20, and arginine 24. Residue lysine 19 participates in phosphoenolpyruvate binding. Phosphoenolpyruvate is bound by residues glycine 89 and arginine 118. The 3-phosphoshikimate site is built by serine 164, serine 165, glutamine 166, serine 192, aspartate 304, and lysine 331. Phosphoenolpyruvate is bound at residue glutamine 166. Aspartate 304 acts as the Proton acceptor in catalysis. Positions 335 and 377 each coordinate phosphoenolpyruvate.

The protein belongs to the EPSP synthase family. As to quaternary structure, monomer.

It localises to the cytoplasm. The catalysed reaction is 3-phosphoshikimate + phosphoenolpyruvate = 5-O-(1-carboxyvinyl)-3-phosphoshikimate + phosphate. It participates in metabolic intermediate biosynthesis; chorismate biosynthesis. Its function is as follows. Catalyzes the transfer of the enolpyruvyl moiety of phosphoenolpyruvate (PEP) to the 5-hydroxyl of shikimate-3-phosphate (S3P) to produce enolpyruvyl shikimate-3-phosphate and inorganic phosphate. This chain is 3-phosphoshikimate 1-carboxyvinyltransferase, found in Korarchaeum cryptofilum (strain OPF8).